Reading from the N-terminus, the 222-residue chain is Large ribosomal subunit protein bL20 (222 aa).

Belongs to the bacterial ribosomal protein bL20 family.

Functionally, binds directly to 23S ribosomal RNA and is necessary for the in vitro assembly process of the 50S ribosomal subunit. It is not involved in the protein synthesizing functions of that subunit. The sequence is that of Large ribosomal subunit protein bL20 (rplT) from Paenarthrobacter aurescens (strain TC1).